Here is a 269-residue protein sequence, read N- to C-terminus: GTP cyclohydrolase FolE2 (269 aa).

It belongs to the GTP cyclohydrolase IV family.

The catalysed reaction is GTP + H2O = 7,8-dihydroneopterin 3'-triphosphate + formate + H(+). It participates in cofactor biosynthesis; 7,8-dihydroneopterin triphosphate biosynthesis; 7,8-dihydroneopterin triphosphate from GTP: step 1/1. Functionally, converts GTP to 7,8-dihydroneopterin triphosphate. This chain is GTP cyclohydrolase FolE2, found in Burkholderia mallei (strain NCTC 10229).